The chain runs to 181 residues: Large ribosomal subunit protein uL5 (181 aa).

Belongs to the universal ribosomal protein uL5 family. As to quaternary structure, part of the 50S ribosomal subunit; part of the 5S rRNA/L5/L18/L25 subcomplex. Contacts the 5S rRNA and the P site tRNA. Forms a bridge to the 30S subunit in the 70S ribosome.

Functionally, this is one of the proteins that bind and probably mediate the attachment of the 5S RNA into the large ribosomal subunit, where it forms part of the central protuberance. In the 70S ribosome it contacts protein S13 of the 30S subunit (bridge B1b), connecting the 2 subunits; this bridge is implicated in subunit movement. Contacts the P site tRNA; the 5S rRNA and some of its associated proteins might help stabilize positioning of ribosome-bound tRNAs. The sequence is that of Large ribosomal subunit protein uL5 from Campylobacter jejuni subsp. doylei (strain ATCC BAA-1458 / RM4099 / 269.97).